The primary structure comprises 65 residues: MPKMKTKSSAKKRFSIRAGGSIKRGQAFKRHILTKKTTKVKRHLRGATAVHERDAASVRAMMPYA.

The segment covering 1-15 has biased composition (basic residues); that stretch reads MPKMKTKSSAKKRFS. A disordered region spans residues 1 to 21; it reads MPKMKTKSSAKKRFSIRAGGS.

Belongs to the bacterial ribosomal protein bL35 family.

The sequence is that of Large ribosomal subunit protein bL35 from Dechloromonas aromatica (strain RCB).